Here is a 347-residue protein sequence, read N- to C-terminus: S-adenosylmethionine:tRNA ribosyltransferase-isomerase (347 aa).

It belongs to the QueA family. In terms of assembly, monomer.

The protein localises to the cytoplasm. The catalysed reaction is 7-aminomethyl-7-carbaguanosine(34) in tRNA + S-adenosyl-L-methionine = epoxyqueuosine(34) in tRNA + adenine + L-methionine + 2 H(+). It participates in tRNA modification; tRNA-queuosine biosynthesis. Its function is as follows. Transfers and isomerizes the ribose moiety from AdoMet to the 7-aminomethyl group of 7-deazaguanine (preQ1-tRNA) to give epoxyqueuosine (oQ-tRNA). This Ectopseudomonas mendocina (strain ymp) (Pseudomonas mendocina) protein is S-adenosylmethionine:tRNA ribosyltransferase-isomerase.